Here is a 345-residue protein sequence, read N- to C-terminus: Krueppel-like factor 3 (345 aa).

The interval 1-74 (MLMFDPVPVK…TVNKRSSPPS (74 aa)) is repressor domain. A Glycyl lysine isopeptide (Lys-Gly) (interchain with G-Cter in SUMO) cross-link involves residue K10. Positions 60–68 (EPVDLTVNK) match the 9aaTAD; inactive motif. The CTBP-binding motif motif lies at 61–65 (PVDLT). A disordered region spans residues 66 to 112 (VNKRSSPPSAGNSPSSLKFPSSHRRASPGLSMPSSSPPIKKYSPPSP). K68 participates in a covalent cross-link: Glycyl lysine isopeptide (Lys-Gly) (interchain with G-Cter in SUMO2). Composition is skewed to low complexity over residues 70–81 (SSPPSAGNSPSS) and 92–108 (SPGLSMPSSSPPIKKYS). Phosphoserine is present on residues S71, S92, S101, S108, and S111. Glycyl lysine isopeptide (Lys-Gly) (interchain with G-Cter in SUMO2) cross-links involve residues K196 and K198. Phosphoserine occurs at positions 216, 224, and 250. 3 consecutive C2H2-type zinc fingers follow at residues 260–284 (HRCDYDGCNKVYTKSSHLKAHRRTH), 290–314 (YKCTWEGCTWKFARSDELTRHFRKH), and 320–342 (FQCPDCDRSFSRSDHLALHRKRH).

This sequence belongs to the krueppel C2H2-type zinc-finger protein family. In terms of assembly, monomer. In terms of processing, sumoylated with SUMO1. Sumoylation is enhanced by PIAS1, PIAS2alpha and PIAS2beta, and PIAS4, but not by Pc2. Enhances transcriptional repression, but has no effect on DNA binding. Sumoylation on Lys-198 is the major site.

It localises to the nucleus. In terms of biological role, binds to the CACCC box of erythroid cell-expressed genes. May play a role in hematopoiesis. This chain is Krueppel-like factor 3 (KLF3), found in Homo sapiens (Human).